We begin with the raw amino-acid sequence, 341 residues long: Arfaptin-2 (341 aa).

The interval 46–85 (NETSIVSGGYGGSGDGLIPTGSGRHPSHSTTPSGPGDEVA) is disordered. Ser-72 carries the post-translational modification Phosphoserine. Thr-76 carries the post-translational modification Phosphothreonine. In terms of domain architecture, AH spans 121–321 (TVDLELELQI…NQKQLEQTLQ (201 aa)).

Forms homodimers or heterodimers with ARFIP1. Interacts with RAC1. Specifically binds to GTP-bound ARF1 and ARF6, but binds to RAC1.GTP and RAC1.GDP with similar affinities. Interacts with ARL1. Interacts (via N-terminus) with IKBKB and IKBKG; these interactions inhibit activation of NF-kappa-B.

It localises to the golgi apparatus. Its subcellular location is the trans-Golgi network membrane. Its function is as follows. Plays a role in constitutive metalloproteinase (MMP) secretion from the trans Golgi network. May have important functions during vesicle biogenesis at certain cargo subdomains, which could be predominantly utilized by secreted MMPs, such as MMP7 and MMP2. Also involved in autophagy by regulating the starvation-dependent trafficking of ATG9A vesicles which deliver the phosphatidylinositol 4-kinase beta (PI4KB) to the autophagosome initiation site. Involved in phagophore growth during mitophagy by regulating ATG9A trafficking to mitochondria. In addition, plays a role in NF-kappa-B inhibition by interacting with IKBKB and IKBKG. This chain is Arfaptin-2, found in Homo sapiens (Human).